A 341-amino-acid polypeptide reads, in one-letter code: Phosphoribosylformylglycinamidine cyclo-ligase (341 aa).

The protein belongs to the AIR synthase family.

It is found in the cytoplasm. The enzyme catalyses 2-formamido-N(1)-(5-O-phospho-beta-D-ribosyl)acetamidine + ATP = 5-amino-1-(5-phospho-beta-D-ribosyl)imidazole + ADP + phosphate + H(+). The protein operates within purine metabolism; IMP biosynthesis via de novo pathway; 5-amino-1-(5-phospho-D-ribosyl)imidazole from N(2)-formyl-N(1)-(5-phospho-D-ribosyl)glycinamide: step 2/2. The sequence is that of Phosphoribosylformylglycinamidine cyclo-ligase from Xanthomonas oryzae pv. oryzae (strain MAFF 311018).